The sequence spans 171 residues: Tetratricopeptide repeat protein 9C (171 aa).

3 TPR repeats span residues 8–41, 72–107, and 108–141; these read AQLYKEEGNQRYREGKYRDAVSRYHRALLQLRGL, TDCYNNLAACLLQMEPVNYERVREYSQKVLERQPDN, and AKALYRAGVAFFHLQDYDQARHYLLAAVNRQPKD.

It belongs to the TTC9 family.

The sequence is that of Tetratricopeptide repeat protein 9C (TTC9C) from Homo sapiens (Human).